A 472-amino-acid chain; its full sequence is MIMKVFNTLTRQKEEFKPLVAGKVSMYVCGPTVYNYIHIGNARSVIAFDTIRRYFEYRGYDVKYVSNFTDVDDKMINEARKEHTTVGELADRYIKAFMEDTEALNIEPATLHPRATHEIQEIIDFVQDLIDKGFAYEVDGDVYYRAKKFPNYGQLSDQNIAELEEGASEHINEEEQSKKEDPIDFALWKAQKDDDEIAWDSPWGKGRPGWHIECSVMSTKYLGDTIDIHGGGQDLEFPHHENEIAQSEAKTGKKFVNYWMHNGFVTVGKKQEKMSKSLHNFVTVHDILKQIDPQVLRFYMSSVQYRRPINYSEDGLKQAETVLKRYQNTLRNLDARLMDEQETLEDSILRDNLTQAKAEFIEAMDDDFNVQNALSIMYDLTSNLNTHLQKNQVDKPALKKAKKLLLAWLEIFGVSFNEKQTENDDEIEVMVAKRDEARKNKNWAESDRLRDELQAKGIVIEDTPQGTRWHRA.

Residue Cys-29 coordinates Zn(2+). The short motif at 31–41 (PTVYNYIHIGN) is the 'HIGH' region element. Residues Cys-214, His-239, and Glu-243 each contribute to the Zn(2+) site. The short motif at 273-277 (KMSKS) is the 'KMSKS' region element. Lys-276 contacts ATP.

It belongs to the class-I aminoacyl-tRNA synthetase family. In terms of assembly, monomer. Zn(2+) is required as a cofactor.

It is found in the cytoplasm. The catalysed reaction is tRNA(Cys) + L-cysteine + ATP = L-cysteinyl-tRNA(Cys) + AMP + diphosphate. This Lactobacillus gasseri (strain ATCC 33323 / DSM 20243 / BCRC 14619 / CIP 102991 / JCM 1131 / KCTC 3163 / NCIMB 11718 / NCTC 13722 / AM63) protein is Cysteine--tRNA ligase.